Reading from the N-terminus, the 455-residue chain is Kynurenine 3-monooxygenase (455 aa).

Belongs to the aromatic-ring hydroxylase family. KMO subfamily. Requires FAD as cofactor.

It catalyses the reaction L-kynurenine + NADPH + O2 + H(+) = 3-hydroxy-L-kynurenine + NADP(+) + H2O. It participates in cofactor biosynthesis; NAD(+) biosynthesis; quinolinate from L-kynurenine: step 1/3. Functionally, catalyzes the hydroxylation of L-kynurenine (L-Kyn) to form 3-hydroxy-L-kynurenine (L-3OHKyn). Required for synthesis of quinolinic acid. The polypeptide is Kynurenine 3-monooxygenase (Xanthomonas axonopodis pv. citri (strain 306)).